We begin with the raw amino-acid sequence, 172 residues long: Putative phosphoesterase Bcer98_0945 (172 aa).

Residue histidine 34 is the Proton donor of the active site. Short sequence motifs (HXTX) lie at residues 34-37 (HITL) and 115-118 (HLTI). The Proton acceptor role is filled by histidine 115.

Belongs to the 2H phosphoesterase superfamily. YjcG family.

In Bacillus cytotoxicus (strain DSM 22905 / CIP 110041 / 391-98 / NVH 391-98), this protein is Putative phosphoesterase Bcer98_0945.